A 345-amino-acid chain; its full sequence is Probable galacturonosyltransferase-like 3 (345 aa).

Topologically, residues M1 to R7 are cytoplasmic. A helical; Signal-anchor for type II membrane protein transmembrane segment spans residues L8–L28. Residues P29 to S345 are Lumenal-facing. A glycan (N-linked (GlcNAc...) asparagine) is linked at N197.

This sequence belongs to the glycosyltransferase 8 family.

It is found in the golgi apparatus membrane. Its pathway is glycan metabolism; pectin biosynthesis. May be involved in pectin and/or xylans biosynthesis in cell walls. This is Probable galacturonosyltransferase-like 3 (GATL3) from Arabidopsis thaliana (Mouse-ear cress).